A 516-amino-acid chain; its full sequence is Amino-acid permease BAT1 (516 aa).

A run of 12 helical transmembrane segments spans residues 33–53, 70–90, 113–133, 164–184, 189–209, 232–252, 275–295, 328–348, 383–403, 406–426, 452–472, and 483–503; these read LSVFSNFAISFSIISVLTGIT, YGWFLAGSFTMCVGLSMAEIC, PLASWMTGWFNIVGQWAVTAS, VVIGIHGGILFIHALLNSLPI, FIGQLAALWNLLGVLVLMILI, LGITSYAYIFVLGLLMSQYTI, GIISAIGISILFGWGYILGIS, FGSGTGGIVCLGVVAVAVFFC, VPINAVWLSALISFCMALTSL, IVAFQAMVSIATIGLYIAYAI, VVGWVAVLWVVTISVLFSLPV, and YTPVAVAGLVAITLSYWLFSA.

It belongs to the amino acid-polyamine-organocation (APC) superfamily. Amino acid/choline transporter (ACT) (TC 2.A.3.4) family. As to expression, expressed in roots, rosette leaves, stems, cauline leaves, flowers and siliques.

Its subcellular location is the mitochondrion membrane. May play a role in primary carbon metabolism and plant growth, by mediating the transport of GABA from the cytosol to mitochondria. When expressed in a heterologous system (yeast), imports Arg and Ala across the plasma membrane and exports Lys and Glu, but does not transport proline. The chain is Amino-acid permease BAT1 (BAT1) from Arabidopsis thaliana (Mouse-ear cress).